The chain runs to 153 residues: Heavy metal-associated isoprenylated plant protein 26 (153 aa).

The HMA domain occupies 25 to 89; that stretch reads LQTVEIKVKM…MSHRTGKKVE (65 aa). 2 residues coordinate a metal cation: Cys-36 and Cys-39. Cys-150 carries the post-translational modification Cysteine methyl ester. A lipid anchor (S-farnesyl cysteine) is attached at Cys-150. The propeptide at 151–153 is removed in mature form; it reads VVM.

Belongs to the HIPP family. Interacts with ZHD11/HB29 and ACBP2 (via ankyrin repeats). May also interact with HB21. Expressed in roots, stems and flowers. Lower expression in siliques and leaves. Expressed in the vascular tissues. Detected in lateral roots, shoot apical meristem, petals of unopened flowers and weak expression in leaf vasculature.

The protein localises to the nucleus membrane. It is found in the cell membrane. Functionally, heavy-metal-binding protein. Binds lead, cadmium and copper. May be involved in heavy-metal transport. May be involved in cadmium transport and play a role in cadmium detoxification. In Arabidopsis thaliana (Mouse-ear cress), this protein is Heavy metal-associated isoprenylated plant protein 26.